The primary structure comprises 217 residues: Thiamine-phosphate synthase (217 aa).

4-amino-2-methyl-5-(diphosphooxymethyl)pyrimidine-binding positions include 41–45 (QYRDK) and Asn-76. The Mg(2+) site is built by Asp-77 and Asp-96. Residue Ser-115 participates in 4-amino-2-methyl-5-(diphosphooxymethyl)pyrimidine binding. Residue 142–144 (SPS) coordinates 2-[(2R,5Z)-2-carboxy-4-methylthiazol-5(2H)-ylidene]ethyl phosphate. Lys-145 is a 4-amino-2-methyl-5-(diphosphooxymethyl)pyrimidine binding site. Residues Gly-172 and 192-193 (IS) each bind 2-[(2R,5Z)-2-carboxy-4-methylthiazol-5(2H)-ylidene]ethyl phosphate.

It belongs to the thiamine-phosphate synthase family. The cofactor is Mg(2+).

It catalyses the reaction 2-[(2R,5Z)-2-carboxy-4-methylthiazol-5(2H)-ylidene]ethyl phosphate + 4-amino-2-methyl-5-(diphosphooxymethyl)pyrimidine + 2 H(+) = thiamine phosphate + CO2 + diphosphate. The enzyme catalyses 2-(2-carboxy-4-methylthiazol-5-yl)ethyl phosphate + 4-amino-2-methyl-5-(diphosphooxymethyl)pyrimidine + 2 H(+) = thiamine phosphate + CO2 + diphosphate. It carries out the reaction 4-methyl-5-(2-phosphooxyethyl)-thiazole + 4-amino-2-methyl-5-(diphosphooxymethyl)pyrimidine + H(+) = thiamine phosphate + diphosphate. It functions in the pathway cofactor biosynthesis; thiamine diphosphate biosynthesis; thiamine phosphate from 4-amino-2-methyl-5-diphosphomethylpyrimidine and 4-methyl-5-(2-phosphoethyl)-thiazole: step 1/1. In terms of biological role, condenses 4-methyl-5-(beta-hydroxyethyl)thiazole monophosphate (THZ-P) and 2-methyl-4-amino-5-hydroxymethyl pyrimidine pyrophosphate (HMP-PP) to form thiamine monophosphate (TMP). This is Thiamine-phosphate synthase from Acidithiobacillus ferrooxidans (strain ATCC 23270 / DSM 14882 / CIP 104768 / NCIMB 8455) (Ferrobacillus ferrooxidans (strain ATCC 23270)).